A 697-amino-acid chain; its full sequence is Polyribonucleotide nucleotidyltransferase (697 aa).

Positions 488 and 494 each coordinate Mg(2+). The KH domain occupies 555–614 (PTFEVITINPDKIRDVIGKGGATIRQITEETKAAIDIEDNGTVRVFGETKAAARAAIAKI). The region spanning 624 to 692 (GKIYDGKVIR…NRGRIKLSMK (69 aa)) is the S1 motif domain.

This sequence belongs to the polyribonucleotide nucleotidyltransferase family. As to quaternary structure, component of the RNA degradosome, which is a multiprotein complex involved in RNA processing and mRNA degradation. The cofactor is Mg(2+).

It localises to the cytoplasm. It carries out the reaction RNA(n+1) + phosphate = RNA(n) + a ribonucleoside 5'-diphosphate. Functionally, involved in mRNA degradation. Catalyzes the phosphorolysis of single-stranded polyribonucleotides processively in the 3'- to 5'-direction. The protein is Polyribonucleotide nucleotidyltransferase of Acinetobacter baylyi (strain ATCC 33305 / BD413 / ADP1).